Reading from the N-terminus, the 393-residue chain is Pyridinium-3,5-bisthiocarboxylic acid mononucleotide nickel insertion protein (393 aa).

This sequence belongs to the LarC family.

The catalysed reaction is Ni(II)-pyridinium-3,5-bisthiocarboxylate mononucleotide = pyridinium-3,5-bisthiocarboxylate mononucleotide + Ni(2+). Functionally, involved in the biosynthesis of a nickel-pincer cofactor ((SCS)Ni(II) pincer complex). Binds Ni(2+), and functions in nickel delivery to pyridinium-3,5-bisthiocarboxylic acid mononucleotide (P2TMN), to form the mature cofactor. Is thus probably required for the activation of nickel-pincer cofactor-dependent enzymes. This chain is Pyridinium-3,5-bisthiocarboxylic acid mononucleotide nickel insertion protein, found in Nocardioides sp. (strain ATCC BAA-499 / JS614).